Consider the following 173-residue polypeptide: Small ribosomal subunit protein uS5 (173 aa).

Positions 17–80 (WQERVIQIRR…ADGKKQLIEV (64 aa)) constitute an S5 DRBM domain.

Belongs to the universal ribosomal protein uS5 family. Part of the 30S ribosomal subunit. Contacts proteins S4 and S8.

With S4 and S12 plays an important role in translational accuracy. Functionally, located at the back of the 30S subunit body where it stabilizes the conformation of the head with respect to the body. This Synechocystis sp. (strain ATCC 27184 / PCC 6803 / Kazusa) protein is Small ribosomal subunit protein uS5.